A 386-amino-acid chain; its full sequence is MGLQGLCRLMSRFNSYKRTNIILQHLKMSNHTDAAAEVLLERKGCAGVITLNRPRFLNTLTLGMIRQIYAQLKKWEQDPKTFLIIIKGAGEKAFCAGGDIRALSEARNTNQKMLQDLFREEYILNNAIDSCQKPYIALIHGITMGGGVGVSVHGQFRVATEKSVFAMPETAIGLFPDVGGGYFLPRLQGKLGYFLALTGFRLKGRDVYTAGIATHFVDFEKLGMLEEDLLALKSPSKENIADVLETYHAKSKTDQDKPFILEEHMDKINSWFSANTVEQIVDNLQQDGSSFALEQLKVIKKMSPTSLKITLRQLMEGSSKTLPEVLIMEYRLSQACMKGHDFHEGVRAVLIDKDQSPKWKPADLKEVTDEDLNDYFKSLGSNDLKF.

The N-terminal 32 residues, 1-32 (MGLQGLCRLMSRFNSYKRTNIILQHLKMSNHT), are a transit peptide targeting the mitochondrion. Lys92 carries the post-translational modification N6-acetyllysine; alternate. Position 92 is an N6-succinyllysine; alternate (Lys92). Substrate contacts are provided by Glu121, Gly146, Glu169, and Asp177. Residue Lys221 is modified to N6-acetyllysine; alternate. Lys221 carries the N6-succinyllysine; alternate modification. Ser234 is modified (phosphoserine). Lys250 and Lys257 each carry N6-succinyllysine. The residue at position 297 (Lys297) is an N6-acetyllysine; alternate. Residue Lys297 is modified to N6-succinyllysine; alternate. Lys301 carries the post-translational modification N6-succinyllysine. Lys353 bears the N6-acetyllysine; alternate mark. N6-succinyllysine; alternate is present on Lys353. Ser356 bears the Phosphoserine mark. Residues Lys360 and Lys365 each carry the N6-acetyllysine modification. Lys377 is modified (N6-succinyllysine).

Belongs to the enoyl-CoA hydratase/isomerase family.

Its subcellular location is the mitochondrion. The catalysed reaction is 3-hydroxy-2-methylpropanoyl-CoA + H2O = 3-hydroxy-2-methylpropanoate + CoA + H(+). Its pathway is amino-acid degradation; L-valine degradation. In terms of biological role, hydrolyzes 3-hydroxyisobutyryl-CoA (HIBYL-CoA), a saline catabolite. Has high activity toward isobutyryl-CoA. Could be an isobutyryl-CoA dehydrogenase that functions in valine catabolism. Also hydrolyzes 3-hydroxypropanoyl-CoA. In Bos taurus (Bovine), this protein is 3-hydroxyisobutyryl-CoA hydrolase, mitochondrial (HIBCH).